Reading from the N-terminus, the 638-residue chain is MTYALLNKIDAPADLRKLDRRELRTLADELRAYVLESVSQTGGHLSSNLGTVELTIALHYVFNTPDDRLVWDVGHQSYPHKILTGRRERMGTLRQWGGISGFPRRSESEYDTFGTAHSSTSISAALGMALGARTLGEKRVSVAVIGDGAMTAGMAFEALNNAGVYKDLPLVVVLNDNDMSISPPVGALNRHLARLLSGQFYAATKKGIEKVLSVAPPVLEFAKRFEEHAKGMMVPATLFEEFGFNYIGPIDGHDLNSLVPTLQNIRERALEGAGPQFLHVVTKKGQGYKLAEADPILYHGPGKFNPAEGIRPAAKPARKTYTQVFGDWLCDMAAADKRLVGITPAMREGSGMVEFERRFPDRYYDVGIAEQHAVTFAGGLACEGLKPVVAIYSTFLQRGYDQLIHDVALQNLPVVFALDRAGLVGADGATHAGAYDIAYLRCIPNMMVMTPSDENECRQLLTTAFHQACPSAVRYPRGSGPGAAIAAELTTVPVGKGVMRREGGARAGHRVGFLAFGSMVHPALGAAEALDAAVADMRFVKPLDVELVKRLAAENDYLVTVEEGSVMGGAGSAVLEALAEAGIDKPVLTLGLPDRFVDHGDPAYLLQQCGLDAAGIERSVRERFGLDQPKVTVASRVA.

Thiamine diphosphate-binding positions include H75 and 116–118 (AHS). D147 contacts Mg(2+). Thiamine diphosphate is bound by residues 148 to 149 (GA), N177, Y288, and E370. N177 serves as a coordination point for Mg(2+).

It belongs to the transketolase family. DXPS subfamily. Homodimer. Mg(2+) serves as cofactor. Thiamine diphosphate is required as a cofactor.

The catalysed reaction is D-glyceraldehyde 3-phosphate + pyruvate + H(+) = 1-deoxy-D-xylulose 5-phosphate + CO2. It functions in the pathway metabolic intermediate biosynthesis; 1-deoxy-D-xylulose 5-phosphate biosynthesis; 1-deoxy-D-xylulose 5-phosphate from D-glyceraldehyde 3-phosphate and pyruvate: step 1/1. Functionally, catalyzes the acyloin condensation reaction between C atoms 2 and 3 of pyruvate and glyceraldehyde 3-phosphate to yield 1-deoxy-D-xylulose-5-phosphate (DXP). The chain is 1-deoxy-D-xylulose-5-phosphate synthase from Cupriavidus necator (strain ATCC 17699 / DSM 428 / KCTC 22496 / NCIMB 10442 / H16 / Stanier 337) (Ralstonia eutropha).